The following is a 356-amino-acid chain: Biotin synthase (356 aa).

The Radical SAM core domain maps to 54 to 278; sequence GEVQLCTLLS…VAVARITMPL (225 aa). Positions 69, 73, and 76 each coordinate [4Fe-4S] cluster. [2Fe-2S] cluster contacts are provided by cysteine 113, cysteine 144, cysteine 204, and arginine 282.

Belongs to the radical SAM superfamily. Biotin synthase family. In terms of assembly, homodimer. It depends on [4Fe-4S] cluster as a cofactor. [2Fe-2S] cluster is required as a cofactor.

The catalysed reaction is (4R,5S)-dethiobiotin + (sulfur carrier)-SH + 2 reduced [2Fe-2S]-[ferredoxin] + 2 S-adenosyl-L-methionine = (sulfur carrier)-H + biotin + 2 5'-deoxyadenosine + 2 L-methionine + 2 oxidized [2Fe-2S]-[ferredoxin]. It functions in the pathway cofactor biosynthesis; biotin biosynthesis; biotin from 7,8-diaminononanoate: step 2/2. Functionally, catalyzes the conversion of dethiobiotin (DTB) to biotin by the insertion of a sulfur atom into dethiobiotin via a radical-based mechanism. The protein is Biotin synthase of Novosphingobium aromaticivorans (strain ATCC 700278 / DSM 12444 / CCUG 56034 / CIP 105152 / NBRC 16084 / F199).